A 234-amino-acid chain; its full sequence is 2-C-methyl-D-erythritol 4-phosphate cytidylyltransferase (234 aa).

The protein belongs to the IspD/TarI cytidylyltransferase family. IspD subfamily.

It carries out the reaction 2-C-methyl-D-erythritol 4-phosphate + CTP + H(+) = 4-CDP-2-C-methyl-D-erythritol + diphosphate. It participates in isoprenoid biosynthesis; isopentenyl diphosphate biosynthesis via DXP pathway; isopentenyl diphosphate from 1-deoxy-D-xylulose 5-phosphate: step 2/6. Functionally, catalyzes the formation of 4-diphosphocytidyl-2-C-methyl-D-erythritol from CTP and 2-C-methyl-D-erythritol 4-phosphate (MEP). In Desulforamulus reducens (strain ATCC BAA-1160 / DSM 100696 / MI-1) (Desulfotomaculum reducens), this protein is 2-C-methyl-D-erythritol 4-phosphate cytidylyltransferase.